The primary structure comprises 254 residues: Imidazole glycerol phosphate synthase subunit HisF (254 aa).

Residues Asp12 and Asp131 contribute to the active site.

This sequence belongs to the HisA/HisF family. As to quaternary structure, heterodimer of HisH and HisF.

It localises to the cytoplasm. The catalysed reaction is 5-[(5-phospho-1-deoxy-D-ribulos-1-ylimino)methylamino]-1-(5-phospho-beta-D-ribosyl)imidazole-4-carboxamide + L-glutamine = D-erythro-1-(imidazol-4-yl)glycerol 3-phosphate + 5-amino-1-(5-phospho-beta-D-ribosyl)imidazole-4-carboxamide + L-glutamate + H(+). The protein operates within amino-acid biosynthesis; L-histidine biosynthesis; L-histidine from 5-phospho-alpha-D-ribose 1-diphosphate: step 5/9. Its function is as follows. IGPS catalyzes the conversion of PRFAR and glutamine to IGP, AICAR and glutamate. The HisF subunit catalyzes the cyclization activity that produces IGP and AICAR from PRFAR using the ammonia provided by the HisH subunit. The sequence is that of Imidazole glycerol phosphate synthase subunit HisF from Herminiimonas arsenicoxydans.